The chain runs to 344 residues: Phosphoribosylformylglycinamidine cyclo-ligase (344 aa).

This sequence belongs to the AIR synthase family.

The protein resides in the cytoplasm. The catalysed reaction is 2-formamido-N(1)-(5-O-phospho-beta-D-ribosyl)acetamidine + ATP = 5-amino-1-(5-phospho-beta-D-ribosyl)imidazole + ADP + phosphate + H(+). Its pathway is purine metabolism; IMP biosynthesis via de novo pathway; 5-amino-1-(5-phospho-D-ribosyl)imidazole from N(2)-formyl-N(1)-(5-phospho-D-ribosyl)glycinamide: step 2/2. This chain is Phosphoribosylformylglycinamidine cyclo-ligase, found in Leptospira interrogans serogroup Icterohaemorrhagiae serovar Lai (strain 56601).